A 184-amino-acid chain; its full sequence is Large ribosomal subunit protein uL6 (184 aa).

It belongs to the universal ribosomal protein uL6 family. As to quaternary structure, part of the 50S ribosomal subunit.

Its function is as follows. This protein binds to the 23S rRNA, and is important in its secondary structure. It is located near the subunit interface in the base of the L7/L12 stalk, and near the tRNA binding site of the peptidyltransferase center. The polypeptide is Large ribosomal subunit protein uL6 (Thermotoga petrophila (strain ATCC BAA-488 / DSM 13995 / JCM 10881 / RKU-1)).